A 327-amino-acid chain; its full sequence is tRNA N6-adenosine threonylcarbamoyltransferase (327 aa).

Residues H107 and H111 each coordinate Fe cation. Substrate is bound by residues 129–133 (LVSGG), D162, G175, and N263. D291 contacts Fe cation.

The protein belongs to the KAE1 / TsaD family. Requires Fe(2+) as cofactor.

The protein localises to the cytoplasm. It catalyses the reaction L-threonylcarbamoyladenylate + adenosine(37) in tRNA = N(6)-L-threonylcarbamoyladenosine(37) in tRNA + AMP + H(+). Required for the formation of a threonylcarbamoyl group on adenosine at position 37 (t(6)A37) in tRNAs that read codons beginning with adenine. Is involved in the transfer of the threonylcarbamoyl moiety of threonylcarbamoyl-AMP (TC-AMP) to the N6 group of A37, together with TsaE and TsaB. TsaD likely plays a direct catalytic role in this reaction. This chain is tRNA N6-adenosine threonylcarbamoyltransferase, found in Nautilia profundicola (strain ATCC BAA-1463 / DSM 18972 / AmH).